The sequence spans 201 residues: Regulator of G-protein signaling 1 (201 aa).

Positions 75–191 (SLEKLLVSEE…LKSEIFFRLA (117 aa)) constitute an RGS domain.

Its subcellular location is the cell membrane. The protein localises to the cytoplasm. It localises to the cytosol. Regulates G protein-coupled receptor signaling cascades, including signaling downstream of the N-formylpeptide chemoattractant receptors and leukotriene receptors. Inhibits B cell chemotaxis. Inhibits signal transduction by increasing the GTPase activity of G protein alpha subunits, thereby driving them into their inactive GDP-bound form. The sequence is that of Regulator of G-protein signaling 1 (rgs1) from Xenopus laevis (African clawed frog).